The following is a 372-amino-acid chain: Tyrosine--tRNA ligase (372 aa).

5 residues coordinate L-tyrosine: Tyr37, Tyr169, Gln173, Asp176, and Gln191. The short motif at Lys246 to Ser250 is the 'KMSKS' region element. Lys249 is a binding site for ATP.

The protein belongs to the class-I aminoacyl-tRNA synthetase family. TyrS type 4 subfamily. Homodimer.

Its subcellular location is the cytoplasm. It catalyses the reaction tRNA(Tyr) + L-tyrosine + ATP = L-tyrosyl-tRNA(Tyr) + AMP + diphosphate + H(+). Catalyzes the attachment of tyrosine to tRNA(Tyr) in a two-step reaction: tyrosine is first activated by ATP to form Tyr-AMP and then transferred to the acceptor end of tRNA(Tyr). The sequence is that of Tyrosine--tRNA ligase from Pyrobaculum calidifontis (strain DSM 21063 / JCM 11548 / VA1).